A 294-amino-acid polypeptide reads, in one-letter code: GTPase Era (294 aa).

One can recognise an Era-type G domain in the interval 4 to 170; sequence KSGFVSVIGR…VEEIFTFLPE (167 aa). Residues 12–19 are G1; it reads GRPNVGKS. 12-19 serves as a coordination point for GTP; that stretch reads GRPNVGKS. The G2 stretch occupies residues 38–42; sequence QTTRN. Residues 59–62 form a G3 region; that stretch reads DTPG. GTP is bound by residues 59-63 and 121-124; these read DTPGI and NKID. The interval 121 to 124 is G4; that stretch reads NKID. The interval 149–151 is G5; it reads ISA. In terms of domain architecture, KH type-2 spans 201–278; that stretch reads TREEVPYGVA…YLDLWVKIEK (78 aa).

It belongs to the TRAFAC class TrmE-Era-EngA-EngB-Septin-like GTPase superfamily. Era GTPase family. Monomer.

The protein resides in the cytoplasm. The protein localises to the cell inner membrane. An essential GTPase that binds both GDP and GTP, with rapid nucleotide exchange. Plays a role in 16S rRNA processing and 30S ribosomal subunit biogenesis and possibly also in cell cycle regulation and energy metabolism. This is GTPase Era from Halothermothrix orenii (strain H 168 / OCM 544 / DSM 9562).